A 454-amino-acid polypeptide reads, in one-letter code: Argininosuccinate lyase (454 aa).

This sequence belongs to the lyase 1 family. Argininosuccinate lyase subfamily.

It localises to the cytoplasm. The catalysed reaction is 2-(N(omega)-L-arginino)succinate = fumarate + L-arginine. It functions in the pathway amino-acid biosynthesis; L-arginine biosynthesis; L-arginine from L-ornithine and carbamoyl phosphate: step 3/3. In Herpetosiphon aurantiacus (strain ATCC 23779 / DSM 785 / 114-95), this protein is Argininosuccinate lyase.